The primary structure comprises 137 residues: Proofreading thioesterase EntH (137 aa).

The Nucleophile or proton acceptor role is filled by Glu-63.

The protein belongs to the thioesterase PaaI family. Homotetramer. Dimer of dimers. Interacts specifically with the aryl carrier protein (ArCP) domain of EntB.

It localises to the cytoplasm. Its pathway is siderophore biosynthesis; enterobactin biosynthesis. Functionally, required for optimal enterobactin synthesis. Acts as a proofreading enzyme that prevents EntB misacylation by hydrolyzing the thioester bound existing between EntB and wrongly charged molecules. This Escherichia coli O6:H1 (strain CFT073 / ATCC 700928 / UPEC) protein is Proofreading thioesterase EntH.